The sequence spans 319 residues: Fructokinase (319 aa).

Belongs to the carbohydrate kinase PfkB family. As to expression, expressed in swelling stolons and, at higher levels, in developing tubers. Low levels found in leaves and stems from tuberizing plants.

It catalyses the reaction D-fructose + ATP = D-fructose 6-phosphate + ADP + H(+). The protein operates within glycan biosynthesis; starch biosynthesis. Functionally, may play an important role in maintaining the flux of carbon towards starch formation. The sequence is that of Fructokinase from Solanum tuberosum (Potato).